A 300-amino-acid polypeptide reads, in one-letter code: MAEEVSSLMKATVLMRQPGRVQEIVSALRRGGGDRLQVISDFDMTLSRFAYNGQRCPSSHNILDNSKIISEDCRKELTELFHHYYPIEIDPHRTIKEKLPHMVQWWSKAHSLLCQQRIQKFQIAQVVGESTAMLREGYKMFFDTLYHNNIPLFIFSAGIGDILEEIIRQMKVFHPNIHIVSNYMDFSEDGFLKGFKGQLIHTYNKNSSVCENSSYFQQLRNKTNIILLGDSIGDLTMADGVPGVQNILKIGFLNDKVEERRERYMDSYDIVLEKDETLDVVNGLLQHILRQGDCVELQGS.

Asp-41 (nucleophile) is an active-site residue. Residues Asp-41 and Asp-43 each coordinate Mg(2+). The active-site Proton donor is the Asp-43. Glu-88 provides a ligand contact to CMP. Glu-88 is a N(7)-methyl-GMP binding site. Residues 156 to 157 and Lys-205 contribute to the substrate site; that span reads SA. Asp-230 lines the Mg(2+) pocket. N6-acetyllysine is present on Lys-256.

This sequence belongs to the pyrimidine 5'-nucleotidase family. As to quaternary structure, monomer.

The protein resides in the cytoplasm. It catalyses the reaction N(7)-methyl-GMP + H2O = N(7)-methylguanosine + phosphate. The enzyme catalyses CMP + H2O = cytidine + phosphate. It carries out the reaction a ribonucleoside 5'-phosphate + H2O = a ribonucleoside + phosphate. Specifically hydrolyzes 7-methylguanosine monophosphate (m(7)GMP) to 7-methylguanosine and inorganic phosphate. The specific activity for m(7)GMP may protect cells against undesired salvage of m(7)GMP and its incorporation into nucleic acids. Also has weak activity for CMP. UMP and purine nucleotides are poor substrates. The sequence is that of 7-methylguanosine phosphate-specific 5'-nucleotidase (Nt5c3b) from Rattus norvegicus (Rat).